The following is a 103-amino-acid chain: uncharacterized protein (103 aa).

The chain crosses the membrane as a helical span at residues 33 to 57 (GYVAAIVAGPVSMSPLDWICPLLAI).

The protein localises to the membrane. This is an uncharacterized protein from Sinorhizobium fredii (strain NBRC 101917 / NGR234).